The chain runs to 582 residues: MAPPMPLLSVRGSDGIQLVLGPPKFTDSETFQRDPSKNCKVSRFTKDGKLFGWCNGEVINIVNCSDSKLLHTLDLPKVVSLEFSPKNTILATWQTYTTGKDGTAGTPNLQLYDLKSGKISNVKSFIQKKMENWSPHWSDDENICARNVNNEVHFFENNNFDTIANKLHLQKVSDFELSPGEQPCKVAVYVPGSKGAPSFVRLYQYPNFSGPNSALANKSFFKADRVAMLWNSKATAVLVTASTDVDKTGASYYGEQTLHYIAVNGESAVVQLPKNGPIYDVTWNKNATEFCVVYGFMPAKATVFNLKCDPIFDFGTGPRNAAFYSPQGHILVLAGFGNLRGQMEVWDVKKYKLISKPTASDATFFSWCPNGEHIITATCSPRLRVGNGYKIWHYTGTLLHKYDVPANSELWQVSWQPFPDGVFPAKAIVYQAVPGDLPTQESKPAEAYRPPALRNKPVSSYKLHEDEPPQSMMPQSTEKPMSKTALKNQKKREAKKAAKQESKMDEPAESDSTNVQNNTPVAVNTGDPETDKKIKNLKKKLKAIEQLKELQSSGKTLEKNQIEKIQKEDILLKELEDLEIGV.

WD repeat units lie at residues Gly-21–Asn-63, Leu-73–Ser-124, Pro-273–Phe-314, and Thr-358–Tyr-402. Residues Asp-436–Lys-533 form a disordered region. A coiled-coil region spans residues Ser-482 to Ile-580. Residues Lys-495–Glu-506 show a composition bias toward basic and acidic residues. Positions Ser-510 to Ala-522 are enriched in polar residues.

This sequence belongs to the WD repeat EIF2A family.

Its function is as follows. Functions in the early steps of protein synthesis of a small number of specific mRNAs. Acts by directing the binding of methionyl-tRNAi to 40S ribosomal subunits. In contrast to the eIF-2 complex, it binds methionyl-tRNAi to 40S subunits in a codon-dependent manner, whereas the eIF-2 complex binds methionyl-tRNAi to 40S subunits in a GTP-dependent manner. This is Eukaryotic translation initiation factor 2A (eif2a) from Xenopus laevis (African clawed frog).